A 308-amino-acid polypeptide reads, in one-letter code: Elongation factor Ts (308 aa).

Residues 80-83 (TDFV) form an involved in Mg(2+) ion dislocation from EF-Tu region.

The protein belongs to the EF-Ts family.

The protein localises to the cytoplasm. Its function is as follows. Associates with the EF-Tu.GDP complex and induces the exchange of GDP to GTP. It remains bound to the aminoacyl-tRNA.EF-Tu.GTP complex up to the GTP hydrolysis stage on the ribosome. This Methylobacterium radiotolerans (strain ATCC 27329 / DSM 1819 / JCM 2831 / NBRC 15690 / NCIMB 10815 / 0-1) protein is Elongation factor Ts.